A 72-amino-acid chain; its full sequence is UPF0495 protein KLLA0D04334g (72 aa).

The chain crosses the membrane as a helical span at residues 20–42 (PVELTPLFLAMGVALASGTWFSY).

The protein belongs to the UPF0495 family.

Its subcellular location is the membrane. The protein is UPF0495 protein KLLA0D04334g of Kluyveromyces lactis (strain ATCC 8585 / CBS 2359 / DSM 70799 / NBRC 1267 / NRRL Y-1140 / WM37) (Yeast).